The sequence spans 560 residues: Formate--tetrahydrofolate ligase (560 aa).

69–76 lines the ATP pocket; sequence TPAGEGKS.

This sequence belongs to the formate--tetrahydrofolate ligase family.

The catalysed reaction is (6S)-5,6,7,8-tetrahydrofolate + formate + ATP = (6R)-10-formyltetrahydrofolate + ADP + phosphate. It participates in one-carbon metabolism; tetrahydrofolate interconversion. The protein is Formate--tetrahydrofolate ligase of Listeria monocytogenes serotype 4a (strain HCC23).